A 103-amino-acid chain; its full sequence is G0/G1 switch protein 2 (103 aa).

In terms of assembly, directly interacts with BCL2; this interaction prevents the formation of the anti-apoptotic BAX-BCL2 complex.

Its subcellular location is the mitochondrion. In terms of biological role, promotes apoptosis by binding to BCL2, hence preventing the formation of protective BCL2-BAX heterodimers. This is G0/G1 switch protein 2 (G0s2) from Mus musculus (Mouse).